A 33-amino-acid polypeptide reads, in one-letter code: Cytochrome b6-f complex subunit 8 (33 aa).

A helical membrane pass occupies residues 2 to 22 (LFTIAWASLAAVFSFSIAMVV).

The protein belongs to the PetN family. The 4 large subunits of the cytochrome b6-f complex are cytochrome b6, subunit IV (17 kDa polypeptide, PetD), cytochrome f and the Rieske protein, while the 4 small subunits are PetG, PetL, PetM and PetN. The complex functions as a dimer.

The protein localises to the cellular thylakoid membrane. In terms of biological role, component of the cytochrome b6-f complex, which mediates electron transfer between photosystem II (PSII) and photosystem I (PSI), cyclic electron flow around PSI, and state transitions. This Synechococcus sp. (strain CC9311) protein is Cytochrome b6-f complex subunit 8.